The primary structure comprises 570 residues: Nucleoprotein (570 aa).

The binding site for the cap structure m7GTP stretch occupies residues 54–241 (MRKQKRDDGD…IDTKKSSLNI (188 aa)). Mn(2+) is bound by residues aspartate 390 and glutamate 392. The Zn(2+) site is built by glutamate 400, cysteine 507, histidine 510, and cysteine 530. Aspartate 534 serves as a coordination point for Mn(2+).

This sequence belongs to the arenaviridae nucleocapsid protein family. As to quaternary structure, homomultimerizes to form the nucleocapsid. Binds to viral genomic RNA. Interacts with glycoprotein G2. Interacts with protein Z; this interaction probably directs the encapsidated genome to budding sites. Interacts with protein L; this interaction does not interfere with Z-L interaction. Interacts with host IKBKE (via Protein kinase domain); the interaction inhibits IKBKE kinase activity.

The protein resides in the virion. It localises to the host cytoplasm. Its function is as follows. Encapsidates the genome, protecting it from nucleases. The encapsidated genomic RNA is termed the nucleocapsid (NC). Serves as template for viral transcription and replication. The increased presence of protein N in host cell does not seem to trigger the switch from transcription to replication as observed in other negative strain RNA viruses. Through the interaction with host IKBKE, strongly inhibits the phosphorylation and nuclear translocation of host IRF3, a protein involved in interferon activation pathway, leading to the inhibition of interferon-beta and IRF3-dependent promoters activation. Also encodes a functional 3'-5' exoribonuclease that degrades preferentially dsRNA substrates and thereby participates in the suppression of interferon induction. This chain is Nucleoprotein, found in Homo sapiens (Human).